The following is a 783-amino-acid chain: Endonuclease MutS2 (783 aa).

Residue 337–344 participates in ATP binding; sequence GPNTGGKT. Positions 708–783 constitute a Smr domain; that stretch reads LHLRGYRYEE…GFGVTVAELK (76 aa).

The protein belongs to the DNA mismatch repair MutS family. MutS2 subfamily. In terms of assembly, homodimer. Binds to stalled ribosomes, contacting rRNA.

Functionally, endonuclease that is involved in the suppression of homologous recombination and thus may have a key role in the control of bacterial genetic diversity. Its function is as follows. Acts as a ribosome collision sensor, splitting the ribosome into its 2 subunits. Detects stalled/collided 70S ribosomes which it binds and splits by an ATP-hydrolysis driven conformational change. Acts upstream of the ribosome quality control system (RQC), a ribosome-associated complex that mediates the extraction of incompletely synthesized nascent chains from stalled ribosomes and their subsequent degradation. Probably generates substrates for RQC. The polypeptide is Endonuclease MutS2 (Staphylococcus haemolyticus (strain JCSC1435)).